Consider the following 940-residue polypeptide: Valine--tRNA ligase (940 aa).

The short motif at 47 to 57 is the 'HIGH' region element; the sequence is PNVTGILHMGH. Residues 564-568 carry the 'KMSKS' region motif; that stretch reads KLSKS. K567 serves as a coordination point for ATP. Residues 873-937 are a coiled coil; sequence VEHIAKEKTR…ELQSILDKLA (65 aa).

Belongs to the class-I aminoacyl-tRNA synthetase family. ValS type 1 subfamily. In terms of assembly, monomer.

It is found in the cytoplasm. It catalyses the reaction tRNA(Val) + L-valine + ATP = L-valyl-tRNA(Val) + AMP + diphosphate. Functionally, catalyzes the attachment of valine to tRNA(Val). As ValRS can inadvertently accommodate and process structurally similar amino acids such as threonine, to avoid such errors, it has a 'posttransfer' editing activity that hydrolyzes mischarged Thr-tRNA(Val) in a tRNA-dependent manner. This chain is Valine--tRNA ligase, found in Chlamydia abortus (strain DSM 27085 / S26/3) (Chlamydophila abortus).